A 44-amino-acid chain; its full sequence is Thrombin-like enzyme F202 (44 aa).

Residues 1 to 44 form the Peptidase S1 domain; the sequence is VVGGDECNINEHRFLVALYANSSLLCGGTLINQEWVLIAAHCDR. C26 and C42 are disulfide-bonded. Catalysis depends on H41, which acts as the Charge relay system.

The protein belongs to the peptidase S1 family. Snake venom subfamily. As to quaternary structure, monomer. Post-translationally, contains 6 disulfide bonds. In terms of tissue distribution, expressed by the venom gland.

It localises to the secreted. Its activity is regulated as follows. Enzyme activity is markedly inhibited by TLCK and PMSF, and moderately by SBTi. Platelet aggregating activity is strongly inhibited by TLCK. In terms of biological role, thrombin-like snake venom serine protease that coagulates fibrinogen by inducing a fast degradation of the alpha chain (FGA) from human citrated plasma, and a slow degradation of beta chain (FGB). Potently induces platelet aggregation in both platelet rich plasma and washed platelet preparations in a concentration-dependent fashion. Shows amidolytic activities. In Crotalus durissus cascavella (Northeastern Brazilian rattlesnake), this protein is Thrombin-like enzyme F202.